A 375-amino-acid polypeptide reads, in one-letter code: Succinyl-diaminopimelate desuccinylase (375 aa).

Residue His-66 coordinates Zn(2+). Asp-68 is a catalytic residue. Zn(2+) is bound at residue Asp-99. Glu-133 acts as the Proton acceptor in catalysis. 3 residues coordinate Zn(2+): Glu-134, Glu-162, and His-348.

It belongs to the peptidase M20A family. DapE subfamily. Homodimer. The cofactor is Zn(2+). Co(2+) serves as cofactor.

It catalyses the reaction N-succinyl-(2S,6S)-2,6-diaminopimelate + H2O = (2S,6S)-2,6-diaminopimelate + succinate. It participates in amino-acid biosynthesis; L-lysine biosynthesis via DAP pathway; LL-2,6-diaminopimelate from (S)-tetrahydrodipicolinate (succinylase route): step 3/3. Catalyzes the hydrolysis of N-succinyl-L,L-diaminopimelic acid (SDAP), forming succinate and LL-2,6-diaminopimelate (DAP), an intermediate involved in the bacterial biosynthesis of lysine and meso-diaminopimelic acid, an essential component of bacterial cell walls. This chain is Succinyl-diaminopimelate desuccinylase, found in Shigella flexneri serotype 5b (strain 8401).